The chain runs to 76 residues: Acyl carrier protein (76 aa).

The Carrier domain occupies 1–75 (MIFEKIKDLI…DIVFYITKNT (75 aa)). O-(pantetheine 4'-phosphoryl)serine is present on Ser-35.

It belongs to the acyl carrier protein (ACP) family. Post-translationally, 4'-phosphopantetheine is transferred from CoA to a specific serine of apo-ACP by AcpS. This modification is essential for activity because fatty acids are bound in thioester linkage to the sulfhydryl of the prosthetic group.

It localises to the cytoplasm. It participates in lipid metabolism; fatty acid biosynthesis. Functionally, carrier of the growing fatty acid chain in fatty acid biosynthesis. The sequence is that of Acyl carrier protein from Aster yellows witches'-broom phytoplasma (strain AYWB).